We begin with the raw amino-acid sequence, 251 residues long: Proteasome subunit alpha type-7 (251 aa).

Belongs to the peptidase T1A family. In terms of assembly, the 26S proteasome consists of a 20S proteasome core and two 19S regulatory subunits. The 20S proteasome core is composed of 28 subunits that are arranged in four stacked rings, resulting in a barrel-shaped structure. The two end rings are each formed by seven alpha subunits, and the two central rings are each formed by seven beta subunits. The catalytic chamber with the active sites is on the inside of the barrel.

The protein localises to the cytoplasm. It localises to the nucleus. In terms of biological role, the proteasome is a multicatalytic proteinase complex which is characterized by its ability to cleave peptides with Arg, Phe, Tyr, Leu, and Glu adjacent to the leaving group at neutral or slightly basic pH. The proteasome has an ATP-dependent proteolytic activity. The chain is Proteasome subunit alpha type-7 (psma7) from Carassius auratus (Goldfish).